Here is a 247-residue protein sequence, read N- to C-terminus: 2,3-bisphosphoglycerate-dependent phosphoglycerate mutase (247 aa).

Substrate contacts are provided by residues 8–15, 21–22, Arg60, 87–90, Lys98, 114–115, and 183–184; these read RHGESTWN, TG, ERHY, RR, and GN. The Tele-phosphohistidine intermediate role is filled by His9. Residue Glu87 is the Proton donor/acceptor of the active site.

This sequence belongs to the phosphoglycerate mutase family. BPG-dependent PGAM subfamily. As to quaternary structure, homodimer.

It carries out the reaction (2R)-2-phosphoglycerate = (2R)-3-phosphoglycerate. It participates in carbohydrate degradation; glycolysis; pyruvate from D-glyceraldehyde 3-phosphate: step 3/5. Functionally, catalyzes the interconversion of 2-phosphoglycerate and 3-phosphoglycerate. This chain is 2,3-bisphosphoglycerate-dependent phosphoglycerate mutase, found in Paracidovorax citrulli (strain AAC00-1) (Acidovorax citrulli).